The chain runs to 141 residues: Large ribosomal subunit protein uL11 (141 aa).

The protein belongs to the universal ribosomal protein uL11 family. In terms of assembly, part of the ribosomal stalk of the 50S ribosomal subunit. Interacts with L10 and the large rRNA to form the base of the stalk. L10 forms an elongated spine to which L12 dimers bind in a sequential fashion forming a multimeric L10(L12)X complex. One or more lysine residues are methylated.

Its function is as follows. Forms part of the ribosomal stalk which helps the ribosome interact with GTP-bound translation factors. The protein is Large ribosomal subunit protein uL11 of Acetivibrio thermocellus (strain ATCC 27405 / DSM 1237 / JCM 9322 / NBRC 103400 / NCIMB 10682 / NRRL B-4536 / VPI 7372) (Clostridium thermocellum).